Consider the following 176-residue polypeptide: MGFPKEGEKVQIHSYKHNGSIHRMWEETTILKGTQSLVIGANDRTVVTESDGRTWVTREPAICYFHANYWFNVIGMLREEGVYYYCNLSSPFAYDSEALKYIDYDLDIKVYPDMTYTLLDEDEYEKHSQIMQYPPVIDTILKRNVAHLTQWIHQRKGPFAPDFVDMWYERYLMYRN.

The active-site Proton donor is Arg-23. Mg(2+)-binding residues include Asn-87, Asp-103, Asp-105, Asp-107, Asp-120, and Glu-123.

Belongs to the Ntdp family. It depends on Mg(2+) as a cofactor.

It carries out the reaction a ribonucleoside 5'-triphosphate + H2O = a ribonucleoside 5'-diphosphate + phosphate + H(+). The enzyme catalyses a ribonucleoside 5'-diphosphate + H2O = a ribonucleoside 5'-phosphate + phosphate + H(+). Functionally, has nucleoside phosphatase activity towards nucleoside triphosphates and nucleoside diphosphates. The protein is Nucleoside triphosphate/diphosphate phosphatase of Bacillus mycoides (strain KBAB4) (Bacillus weihenstephanensis).